The primary structure comprises 452 residues: Bifunctional protein GlmU (452 aa).

The tract at residues 1-226 (MNFSAVILAA…PIEVEGVNDR (226 aa)) is pyrophosphorylase. Residues 8-11 (LAAG), Lys22, Gln73, 78-79 (GT), 100-102 (YGD), Gly137, Glu151, Asn166, and Asn224 each bind UDP-N-acetyl-alpha-D-glucosamine. Asp102 contacts Mg(2+). Residue Asn224 participates in Mg(2+) binding. A linker region spans residues 227 to 247 (AQLARLERAYQAAQAQKLLEQ). The segment at 248–452 (GVMLRDPSRF…IANWQRPTKK (205 aa)) is N-acetyltransferase. 2 residues coordinate UDP-N-acetyl-alpha-D-glucosamine: Arg330 and Lys348. His360 acts as the Proton acceptor in catalysis. Residues Tyr363 and Asn374 each contribute to the UDP-N-acetyl-alpha-D-glucosamine site. Acetyl-CoA-binding positions include Ala377, 383–384 (NY), Ser402, Ala420, and Arg437.

It in the N-terminal section; belongs to the N-acetylglucosamine-1-phosphate uridyltransferase family. The protein in the C-terminal section; belongs to the transferase hexapeptide repeat family. Homotrimer. It depends on Mg(2+) as a cofactor.

Its subcellular location is the cytoplasm. The enzyme catalyses alpha-D-glucosamine 1-phosphate + acetyl-CoA = N-acetyl-alpha-D-glucosamine 1-phosphate + CoA + H(+). It catalyses the reaction N-acetyl-alpha-D-glucosamine 1-phosphate + UTP + H(+) = UDP-N-acetyl-alpha-D-glucosamine + diphosphate. The protein operates within nucleotide-sugar biosynthesis; UDP-N-acetyl-alpha-D-glucosamine biosynthesis; N-acetyl-alpha-D-glucosamine 1-phosphate from alpha-D-glucosamine 6-phosphate (route II): step 2/2. It participates in nucleotide-sugar biosynthesis; UDP-N-acetyl-alpha-D-glucosamine biosynthesis; UDP-N-acetyl-alpha-D-glucosamine from N-acetyl-alpha-D-glucosamine 1-phosphate: step 1/1. It functions in the pathway bacterial outer membrane biogenesis; LPS lipid A biosynthesis. Functionally, catalyzes the last two sequential reactions in the de novo biosynthetic pathway for UDP-N-acetylglucosamine (UDP-GlcNAc). The C-terminal domain catalyzes the transfer of acetyl group from acetyl coenzyme A to glucosamine-1-phosphate (GlcN-1-P) to produce N-acetylglucosamine-1-phosphate (GlcNAc-1-P), which is converted into UDP-GlcNAc by the transfer of uridine 5-monophosphate (from uridine 5-triphosphate), a reaction catalyzed by the N-terminal domain. This chain is Bifunctional protein GlmU, found in Aliivibrio fischeri (strain MJ11) (Vibrio fischeri).